Consider the following 266-residue polypeptide: 4-hydroxy-tetrahydrodipicolinate reductase (266 aa).

10 to 15 (GPRGRM) provides a ligand contact to NAD(+). K38 contributes to the NADP(+) binding site. Residues 99-101 (GTT) and 125-128 (APNF) each bind NAD(+). Catalysis depends on H155, which acts as the Proton donor/acceptor. H156 is a (S)-2,3,4,5-tetrahydrodipicolinate binding site. The active-site Proton donor is the K159. (S)-2,3,4,5-tetrahydrodipicolinate is bound at residue 165–166 (GT).

Belongs to the DapB family.

The protein localises to the cytoplasm. It carries out the reaction (S)-2,3,4,5-tetrahydrodipicolinate + NAD(+) + H2O = (2S,4S)-4-hydroxy-2,3,4,5-tetrahydrodipicolinate + NADH + H(+). It catalyses the reaction (S)-2,3,4,5-tetrahydrodipicolinate + NADP(+) + H2O = (2S,4S)-4-hydroxy-2,3,4,5-tetrahydrodipicolinate + NADPH + H(+). It participates in amino-acid biosynthesis; L-lysine biosynthesis via DAP pathway; (S)-tetrahydrodipicolinate from L-aspartate: step 4/4. Its function is as follows. Catalyzes the conversion of 4-hydroxy-tetrahydrodipicolinate (HTPA) to tetrahydrodipicolinate. This Bacillus cereus (strain ATCC 14579 / DSM 31 / CCUG 7414 / JCM 2152 / NBRC 15305 / NCIMB 9373 / NCTC 2599 / NRRL B-3711) protein is 4-hydroxy-tetrahydrodipicolinate reductase.